A 309-amino-acid chain; its full sequence is Sulfate adenylyltransferase subunit 2 (309 aa).

This sequence belongs to the PAPS reductase family. CysD subfamily. As to quaternary structure, heterodimer composed of CysD, the smaller subunit, and CysN.

It catalyses the reaction sulfate + ATP + H(+) = adenosine 5'-phosphosulfate + diphosphate. It functions in the pathway sulfur metabolism; hydrogen sulfide biosynthesis; sulfite from sulfate: step 1/3. In terms of biological role, with CysN forms the ATP sulfurylase (ATPS) that catalyzes the adenylation of sulfate producing adenosine 5'-phosphosulfate (APS) and diphosphate, the first enzymatic step in sulfur assimilation pathway. APS synthesis involves the formation of a high-energy phosphoric-sulfuric acid anhydride bond driven by GTP hydrolysis by CysN coupled to ATP hydrolysis by CysD. This chain is Sulfate adenylyltransferase subunit 2, found in Mycolicibacterium gilvum (strain PYR-GCK) (Mycobacterium gilvum (strain PYR-GCK)).